Reading from the N-terminus, the 1040-residue chain is FHF complex subunit HOOK-interacting protein 1A (1040 aa).

Disordered regions lie at residues 555-613 (PQQL…PIDP), 653-746 (SEDM…AAHP), and 769-808 (LMEQ…EDEE). Residues 653–664 (SEDMKDSQEEAA) show a composition bias toward basic and acidic residues. A compositionally biased stretch (polar residues) spans 677-690 (VPINNGPLLSTQPE). Composition is skewed to basic and acidic residues over residues 696–719 (EWNR…REPE) and 783–804 (TKEE…KKEL).

The protein belongs to the FHIP family. May be a component of the FTS/Hook/FHIP complex (FHF complex), composed of AKTIP/FTS, FHIP1B, and one or more members of the Hook family of proteins HOOK1, HOOK2, and HOOK3. May interact directly with AKTIP/FTS.

Its function is as follows. Probable component of the FTS/Hook/FHIP complex (FHF complex). FHF complex promotes the distribution of AP-4 complex to the perinuclear area of the cell. This is FHF complex subunit HOOK-interacting protein 1A from Homo sapiens (Human).